Reading from the N-terminus, the 212-residue chain is Large ribosomal subunit protein uL3 (212 aa).

Glutamine 153 is subject to N5-methylglutamine.

This sequence belongs to the universal ribosomal protein uL3 family. As to quaternary structure, part of the 50S ribosomal subunit. Forms a cluster with proteins L14 and L19. Post-translationally, methylated by PrmB.

One of the primary rRNA binding proteins, it binds directly near the 3'-end of the 23S rRNA, where it nucleates assembly of the 50S subunit. In Shewanella piezotolerans (strain WP3 / JCM 13877), this protein is Large ribosomal subunit protein uL3.